We begin with the raw amino-acid sequence, 421 residues long: 3-phosphoshikimate 1-carboxyvinyltransferase (421 aa).

Residues Lys-19, Ser-20, and Arg-24 each coordinate 3-phosphoshikimate. Phosphoenolpyruvate is bound at residue Lys-19. Phosphoenolpyruvate contacts are provided by Gly-88 and Arg-116. 3-phosphoshikimate is bound by residues Ser-160, Gln-162, Asp-307, and Lys-334. Position 162 (Gln-162) interacts with phosphoenolpyruvate. Asp-307 (proton acceptor) is an active-site residue. 2 residues coordinate phosphoenolpyruvate: Arg-338 and Arg-380.

Belongs to the EPSP synthase family. As to quaternary structure, monomer.

The protein resides in the cytoplasm. It catalyses the reaction 3-phosphoshikimate + phosphoenolpyruvate = 5-O-(1-carboxyvinyl)-3-phosphoshikimate + phosphate. It participates in metabolic intermediate biosynthesis; chorismate biosynthesis; chorismate from D-erythrose 4-phosphate and phosphoenolpyruvate: step 6/7. In terms of biological role, catalyzes the transfer of the enolpyruvyl moiety of phosphoenolpyruvate (PEP) to the 5-hydroxyl of shikimate-3-phosphate (S3P) to produce enolpyruvyl shikimate-3-phosphate and inorganic phosphate. In Thermotoga sp. (strain RQ2), this protein is 3-phosphoshikimate 1-carboxyvinyltransferase.